We begin with the raw amino-acid sequence, 612 residues long: Probable methyltransferase PMT9 (612 aa).

Residues 1-14 (MKHFRTERVRATPK) are Cytoplasmic-facing. Residues 15 to 35 (LFTYVLVGFIALLGLTCLYYG) form a helical; Signal-anchor for type II membrane protein membrane-spanning segment. At 36 to 612 (SSFAPGSRKS…LWSLPAISVS (577 aa)) the chain is on the lumenal side. Asparagine 107, asparagine 383, and asparagine 562 each carry an N-linked (GlcNAc...) asparagine glycan.

The protein belongs to the methyltransferase superfamily.

It localises to the golgi apparatus membrane. The polypeptide is Probable methyltransferase PMT9 (Arabidopsis thaliana (Mouse-ear cress)).